The chain runs to 138 residues: Ribosome-binding factor A (138 aa).

It belongs to the RbfA family. In terms of assembly, monomer. Binds 30S ribosomal subunits, but not 50S ribosomal subunits or 70S ribosomes.

It localises to the cytoplasm. In terms of biological role, one of several proteins that assist in the late maturation steps of the functional core of the 30S ribosomal subunit. Associates with free 30S ribosomal subunits (but not with 30S subunits that are part of 70S ribosomes or polysomes). Required for efficient processing of 16S rRNA. May interact with the 5'-terminal helix region of 16S rRNA. The chain is Ribosome-binding factor A from Pseudoalteromonas atlantica (strain T6c / ATCC BAA-1087).